The following is a 121-amino-acid chain: uncharacterized protein (121 aa).

The interval 101 to 121 is disordered; that stretch reads TVVKKEDVRESPVDTFMENAT. Over residues 102–112 the composition is skewed to basic and acidic residues; that stretch reads VVKKEDVRESP.

This is an uncharacterized protein from Schizosaccharomyces pombe (strain 972 / ATCC 24843) (Fission yeast).